We begin with the raw amino-acid sequence, 293 residues long: 4-diphosphocytidyl-2-C-methyl-D-erythritol kinase (293 aa).

The active site involves K16. P99–S109 provides a ligand contact to ATP. The active site involves D141.

It belongs to the GHMP kinase family. IspE subfamily.

It carries out the reaction 4-CDP-2-C-methyl-D-erythritol + ATP = 4-CDP-2-C-methyl-D-erythritol 2-phosphate + ADP + H(+). Its pathway is isoprenoid biosynthesis; isopentenyl diphosphate biosynthesis via DXP pathway; isopentenyl diphosphate from 1-deoxy-D-xylulose 5-phosphate: step 3/6. Its function is as follows. Catalyzes the phosphorylation of the position 2 hydroxy group of 4-diphosphocytidyl-2C-methyl-D-erythritol. This Burkholderia ambifaria (strain MC40-6) protein is 4-diphosphocytidyl-2-C-methyl-D-erythritol kinase.